A 296-amino-acid polypeptide reads, in one-letter code: Ribosomal RNA small subunit methyltransferase A (296 aa).

Over residues 1–11 the composition is skewed to basic and acidic residues; that stretch reads MERSHVGRDCG. The segment at 1-24 is disordered; sequence MERSHVGRDCGSRSSPRAFSVPTS. The span at 12–24 shows a compositional bias: polar residues; the sequence is SRSSPRAFSVPTS. S-adenosyl-L-methionine contacts are provided by Asn-43, Leu-45, Gly-70, Glu-91, Asp-113, and Asn-135.

Belongs to the class I-like SAM-binding methyltransferase superfamily. rRNA adenine N(6)-methyltransferase family. RsmA subfamily.

Its subcellular location is the cytoplasm. It carries out the reaction adenosine(1518)/adenosine(1519) in 16S rRNA + 4 S-adenosyl-L-methionine = N(6)-dimethyladenosine(1518)/N(6)-dimethyladenosine(1519) in 16S rRNA + 4 S-adenosyl-L-homocysteine + 4 H(+). In terms of biological role, specifically dimethylates two adjacent adenosines (A1518 and A1519) in the loop of a conserved hairpin near the 3'-end of 16S rRNA in the 30S particle. May play a critical role in biogenesis of 30S subunits. In Salinibacter ruber (strain DSM 13855 / M31), this protein is Ribosomal RNA small subunit methyltransferase A.